Reading from the N-terminus, the 680-residue chain is DNA-directed RNA polymerase subunit beta' (680 aa).

Zn(2+) contacts are provided by Cys-69, Cys-71, Cys-87, and Cys-90. Asp-489, Asp-491, and Asp-493 together coordinate Mg(2+).

Belongs to the RNA polymerase beta' chain family. RpoC1 subfamily. In terms of assembly, in plastids the minimal PEP RNA polymerase catalytic core is composed of four subunits: alpha, beta, beta', and beta''. When a (nuclear-encoded) sigma factor is associated with the core the holoenzyme is formed, which can initiate transcription. The cofactor is Mg(2+). Zn(2+) serves as cofactor.

It is found in the plastid. Its subcellular location is the chloroplast. It carries out the reaction RNA(n) + a ribonucleoside 5'-triphosphate = RNA(n+1) + diphosphate. In terms of biological role, DNA-dependent RNA polymerase catalyzes the transcription of DNA into RNA using the four ribonucleoside triphosphates as substrates. The chain is DNA-directed RNA polymerase subunit beta' from Barbarea verna (Land cress).